A 372-amino-acid polypeptide reads, in one-letter code: Cytochrome b (372 aa).

A run of 4 helical transmembrane segments spans residues 25–45 (FGSM…FLAI), 69–90 (WIMQ…YIHI), 105–125 (WLSG…GYVL), and 170–190 (FFAL…IHIM). Heme b contacts are provided by His-75 and His-89. Heme b contacts are provided by His-174 and His-188. His-193 is a binding site for a ubiquinone. Helical transmembrane passes span 218 to 238 (HKDI…MTLT), 280 to 300 (LGGT…PFTH), 312 to 332 (LTQL…WAAT), and 339 to 358 (FTMI…IMNP).

This sequence belongs to the cytochrome b family. The cytochrome bc1 complex contains 3 respiratory subunits (MT-CYB, CYC1 and UQCRFS1), 2 core proteins (UQCRC1 and UQCRC2) and probably 6 low-molecular weight proteins. Heme b is required as a cofactor.

The protein localises to the mitochondrion inner membrane. Its function is as follows. Component of the ubiquinol-cytochrome c reductase complex (complex III or cytochrome b-c1 complex) that is part of the mitochondrial respiratory chain. The b-c1 complex mediates electron transfer from ubiquinol to cytochrome c. Contributes to the generation of a proton gradient across the mitochondrial membrane that is then used for ATP synthesis. The sequence is that of Cytochrome b (MT-CYB) from Lycodon semicarinatus (Ryukyu odd-tooth snake).